Consider the following 155-residue polypeptide: Small ribosomal subunit protein uS7cz/uS7cy (155 aa).

The protein belongs to the universal ribosomal protein uS7 family. As to quaternary structure, part of the 30S ribosomal subunit.

The protein resides in the plastid. It is found in the chloroplast. One of the primary rRNA binding proteins, it binds directly to 16S rRNA where it nucleates assembly of the head domain of the 30S subunit. In Jasminum nudiflorum (Winter jasmine), this protein is Small ribosomal subunit protein uS7cz/uS7cy (rps7-A).